Consider the following 409-residue polypeptide: Tryptophan synthase beta chain (409 aa).

K86 carries the post-translational modification N6-(pyridoxal phosphate)lysine.

This sequence belongs to the TrpB family. Tetramer of two alpha and two beta chains. Pyridoxal 5'-phosphate serves as cofactor.

The enzyme catalyses (1S,2R)-1-C-(indol-3-yl)glycerol 3-phosphate + L-serine = D-glyceraldehyde 3-phosphate + L-tryptophan + H2O. It participates in amino-acid biosynthesis; L-tryptophan biosynthesis; L-tryptophan from chorismate: step 5/5. The beta subunit is responsible for the synthesis of L-tryptophan from indole and L-serine. This chain is Tryptophan synthase beta chain, found in Shewanella pealeana (strain ATCC 700345 / ANG-SQ1).